Reading from the N-terminus, the 137-residue chain is Ribosome-binding factor A (137 aa).

It belongs to the RbfA family. Monomer. Binds 30S ribosomal subunits, but not 50S ribosomal subunits or 70S ribosomes.

It is found in the cytoplasm. Its function is as follows. One of several proteins that assist in the late maturation steps of the functional core of the 30S ribosomal subunit. Associates with free 30S ribosomal subunits (but not with 30S subunits that are part of 70S ribosomes or polysomes). Required for efficient processing of 16S rRNA. May interact with the 5'-terminal helix region of 16S rRNA. This chain is Ribosome-binding factor A, found in Trichodesmium erythraeum (strain IMS101).